Here is a 243-residue protein sequence, read N- to C-terminus: UMP-CMP kinase 1 (243 aa).

An ATP-binding site is contributed by 29–34 (GSGKGT). Residues 49–78 (SAGDLLREEAKYDTEQGTMIKNLMNEGKLV) form an NMP region. A ribonucleoside 5'-phosphate-binding positions include Arg-55, 76–78 (KLV), and 103–106 (GFPR). Asn-110 provides a ligand contact to CMP. Positions 141-149 (NRNQGRDDD) are LID. Arg-142 contacts ATP. 2 residues coordinate a ribonucleoside 5'-phosphate: Arg-146 and Arg-157. Arg-185 contacts ATP.

Belongs to the adenylate kinase family. UMP-CMP kinase subfamily. Monomer. Mg(2+) is required as a cofactor.

The protein localises to the cytoplasm. It is found in the nucleus. It carries out the reaction UMP + ATP = UDP + ADP. The enzyme catalyses CMP + ATP = CDP + ADP. The catalysed reaction is dCMP + ATP = dCDP + ADP. Its function is as follows. Catalyzes the phosphorylation of pyrimidine nucleoside monophosphates at the expense of ATP. Plays an important role in de novo pyrimidine nucleotide biosynthesis. Has preference for UMP and CMP as phosphate acceptors. The polypeptide is UMP-CMP kinase 1 (Oryza sativa subsp. japonica (Rice)).